Here is a 115-residue protein sequence, read N- to C-terminus: Autophagy-related protein 8i (115 aa).

Glycine 115 carries the Phosphatidylethanolamine amidated glycine lipid modification.

It belongs to the ATG8 family. Interacts with ATG4. Interacts with NBR1. In terms of processing, gly-115 forms then a thioester bond with the 'Cys-558' of ATG7 (E1-like activating enzyme) before being transferred to the 'Cys-258' of ATG3 (the specific E2 conjugating enzyme), in order to be finally amidated with phosphatidylethanolamine. This lipid modification anchors ATG8 to autophagosomes. In terms of tissue distribution, constitutively expressed.

The protein resides in the cytoplasmic vesicle. Its subcellular location is the autophagosome membrane. It localises to the vacuole membrane. The protein localises to the cytoplasm. It is found in the cytoskeleton. Functionally, ubiquitin-like modifier involved in autophagosomes formation. May mediate the delivery of the autophagosomes to the vacuole via the microtubule cytoskeleton. The polypeptide is Autophagy-related protein 8i (ATG8I) (Arabidopsis thaliana (Mouse-ear cress)).